We begin with the raw amino-acid sequence, 146 residues long: Acireductone dioxygenase (146 aa).

Positions 71, 73, 77, and 116 each coordinate Fe(2+). Ni(2+) contacts are provided by histidine 71, histidine 73, glutamate 77, and histidine 116.

Belongs to the acireductone dioxygenase (ARD) family. Fe(2+) is required as a cofactor. Requires Ni(2+) as cofactor.

The protein resides in the cytoplasm. It localises to the nucleus. The catalysed reaction is 1,2-dihydroxy-5-(methylsulfanyl)pent-1-en-3-one + O2 = 4-methylsulfanyl-2-oxobutanoate + formate + 2 H(+). It catalyses the reaction 1,2-dihydroxy-5-(methylsulfanyl)pent-1-en-3-one + O2 = 3-(methylsulfanyl)propanoate + CO + formate + 2 H(+). The protein operates within amino-acid biosynthesis; L-methionine biosynthesis via salvage pathway; L-methionine from S-methyl-5-thio-alpha-D-ribose 1-phosphate: step 5/6. Catalyzes 2 different reactions between oxygen and the acireductone 1,2-dihydroxy-3-keto-5-methylthiopentene (DHK-MTPene) depending upon the metal bound in the active site. Fe-containing acireductone dioxygenase (Fe-ARD) produces formate and 2-keto-4-methylthiobutyrate (KMTB), the alpha-ketoacid precursor of methionine in the methionine recycle pathway. Ni-containing acireductone dioxygenase (Ni-ARD) produces methylthiopropionate, carbon monoxide and formate, and does not lie on the methionine recycle pathway. This Heterostelium pallidum (strain ATCC 26659 / Pp 5 / PN500) (Cellular slime mold) protein is Acireductone dioxygenase.